Consider the following 1209-residue polypeptide: Zinc finger protein 804A (1209 aa).

The C2H2-type zinc-finger motif lies at 57-81; sequence FYCELCDKQYYKHQEFDNHINSYDH. Residues 380–394 show a composition bias toward basic and acidic residues; it reads VKHNEASTTEVENKN. Disordered regions lie at residues 380 to 401 and 792 to 860; these read VKHN…TLAP and PEEF…MKPQ. Positions 807–819 are enriched in basic residues; sequence KPKKKRRRKRGRF. 2 stretches are compositionally biased toward basic and acidic residues: residues 826–836 and 848–860; these read LELKENTDYPV and LISE…MKPQ.

The sequence is that of Zinc finger protein 804A (ZNF804A) from Homo sapiens (Human).